Consider the following 727-residue polypeptide: NADH-ubiquinone oxidoreductase 75 kDa subunit, mitochondrial (727 aa).

The N-terminal 23 residues, 1–23 (MLRIPIKRALIGLSNSPKGYVRT), are a transit peptide targeting the mitochondrion. One can recognise a 2Fe-2S ferredoxin-type domain in the interval 30-108 (NLIEVFVDGQ…GWNILTNSEK (79 aa)). [2Fe-2S] cluster-binding residues include Cys64, Cys75, and Cys78. An N6-acetyllysine modification is found at Lys84. [2Fe-2S] cluster is bound at residue Cys92. The 4Fe-4S His(Cys)3-ligated-type domain occupies 108–147 (KSKKAREGVMEFLLANHPLDCPICDQGGECDLQDQSMMFG). [4Fe-4S] cluster contacts are provided by His124, Cys128, Cys131, Cys137, Cys176, Cys179, Cys182, and Cys226. In terms of domain architecture, 4Fe-4S Mo/W bis-MGD-type spans 245–301 (TRKTESIDVMDAVGSNIVVSTRTGEVMRILPRMHEDINEEWISDKTRFAYDGLKRQR). Ser461 bears the Phosphoserine mark. Lys467, Lys499, and Lys709 each carry N6-acetyllysine.

The protein belongs to the complex I 75 kDa subunit family. In terms of assembly, core subunit of respiratory chain NADH dehydrogenase (Complex I) which is composed of 45 different subunits. This is the largest subunit of complex I and it is a component of the iron-sulfur (IP) fragment of the enzyme. Complex I associates with ubiquinol-cytochrome reductase complex (Complex III) to form supercomplexes. In astrocytes, less complex I is assembled into supercomplexes as compared to neurons. Interacts with MDM2. Interacts with AKAP1. The cofactor is [2Fe-2S] cluster. It depends on [4Fe-4S] cluster as a cofactor. Acetylation of Lys-84 is observed in liver mitochondria from fasted mice but not from fed mice. As to expression, brain. More abundant in neurons than in astrocytes (at protein level).

The protein resides in the mitochondrion inner membrane. The catalysed reaction is a ubiquinone + NADH + 5 H(+)(in) = a ubiquinol + NAD(+) + 4 H(+)(out). In terms of biological role, core subunit of the mitochondrial membrane respiratory chain NADH dehydrogenase (Complex I) which catalyzes electron transfer from NADH through the respiratory chain, using ubiquinone as an electron acceptor. Essential for catalysing the entry and efficient transfer of electrons within complex I. Plays a key role in the assembly and stability of complex I and participates in the association of complex I with ubiquinol-cytochrome reductase complex (Complex III) to form supercomplexes. This Mus musculus (Mouse) protein is NADH-ubiquinone oxidoreductase 75 kDa subunit, mitochondrial (Ndufs1).